A 102-amino-acid chain; its full sequence is Large ribosomal subunit protein bL21 (102 aa).

Belongs to the bacterial ribosomal protein bL21 family. Part of the 50S ribosomal subunit. Contacts protein L20.

In terms of biological role, this protein binds to 23S rRNA in the presence of protein L20. In Saccharopolyspora erythraea (strain ATCC 11635 / DSM 40517 / JCM 4748 / NBRC 13426 / NCIMB 8594 / NRRL 2338), this protein is Large ribosomal subunit protein bL21.